We begin with the raw amino-acid sequence, 308 residues long: Ribosomal protein L11 methyltransferase (308 aa).

S-adenosyl-L-methionine contacts are provided by threonine 148, glycine 169, aspartate 191, and asparagine 239.

It belongs to the methyltransferase superfamily. PrmA family.

Its subcellular location is the cytoplasm. It carries out the reaction L-lysyl-[protein] + 3 S-adenosyl-L-methionine = N(6),N(6),N(6)-trimethyl-L-lysyl-[protein] + 3 S-adenosyl-L-homocysteine + 3 H(+). In terms of biological role, methylates ribosomal protein L11. The chain is Ribosomal protein L11 methyltransferase from Psychrobacter cryohalolentis (strain ATCC BAA-1226 / DSM 17306 / VKM B-2378 / K5).